We begin with the raw amino-acid sequence, 324 residues long: Methyltransferase pytC (324 aa).

The interval 1–28 (MTVRTAAEPPNRIEVDMDAPSLDTDSSC) is disordered.

This sequence belongs to the methyltransferase superfamily. LaeA methyltransferase family.

The protein operates within secondary metabolite biosynthesis. Its function is as follows. Methyltransferase; part of the gene cluster that mediates the biosynthesis of pyranterreones, a family of antioxidative compounds. The first step of pyranonigrins biosynthesis is performed by the hybrid PKS-NRPS synthetase pytA that condenses 4 malonyl-CoA units ato the acetyl starter unit by the modular PKS of pytA. The acyl chain is then connected to an L-serine through the amide bond by the modular NRPS of pytA. A tetramic acid is formed and released from the PKS-NRPS pytA to give pyranterreone 5 with the help of the thioesterase pytI. Pyranterreone 5 could be methylated by pytC to afford pyranterreone 6. Both pyranterreones 5 and 6 are subsequently oxidized by the FAD-linked oxidoreductase pytB and the cytochrome P450 monooxygenase pytD to form the fused gamma-pyrone core, resulting in pyranterreones 7 and 11, respectively. The hydroxy group at C-8 of pyranterreones 7 and 11 are dehydrated by the aspartyl protease pytH to form a delta-7 double bond to give pyranterreones 3 and 1, 2 accordingly. The exo-methylene of pyranterreone 3 could be reduced into a pendant methyl by reductase pytE to provide pyranterreone 4, also known as cordylactam. Pyranterreone 4 can be reconverted to pyranterreone 3 through pytB-catalyzed dehydrogenation or further oxidized to pyranterreones 9 and 10. This chain is Methyltransferase pytC, found in Aspergillus terreus.